The primary structure comprises 120 residues: Ribonuclease P protein component (120 aa).

The protein belongs to the RnpA family. As to quaternary structure, consists of a catalytic RNA component (M1 or rnpB) and a protein subunit.

It carries out the reaction Endonucleolytic cleavage of RNA, removing 5'-extranucleotides from tRNA precursor.. Functionally, RNaseP catalyzes the removal of the 5'-leader sequence from pre-tRNA to produce the mature 5'-terminus. It can also cleave other RNA substrates such as 4.5S RNA. The protein component plays an auxiliary but essential role in vivo by binding to the 5'-leader sequence and broadening the substrate specificity of the ribozyme. In Dehalococcoides mccartyi (strain ATCC BAA-2266 / KCTC 15142 / 195) (Dehalococcoides ethenogenes (strain 195)), this protein is Ribonuclease P protein component.